We begin with the raw amino-acid sequence, 37 residues long: Potassium channel toxin alpha-KTx 4.3 (37 aa).

Intrachain disulfides connect Cys-7/Cys-28, Cys-13/Cys-33, and Cys-17/Cys-35. The interaction with Ca(2+)-activated K(+) channels stretch occupies residues 26 to 33 (GKCMNGKC).

In terms of tissue distribution, expressed by the venom gland.

Its subcellular location is the secreted. Its function is as follows. Blocks reversibly Shaker B potassium-channels. This chain is Potassium channel toxin alpha-KTx 4.3, found in Tityus discrepans (Venezuelan scorpion).